The following is a 492-amino-acid chain: Histone-lysine N-methyltransferase ASHH1 (492 aa).

One can recognise an AWS domain in the interval 36-87 (EDISICECKFDFGDPDSACGERCLNVITNTECTPGYCPCGVYCKNQKFQKCE). One can recognise an SET domain in the interval 84–206 (QKCEYAKTKL…PRTELAYDYN (123 aa)). Residues 213 to 229 (AKVRCLCGAVACSGFLG) form the Post-SET domain. The disordered stretch occupies residues 259 to 340 (SAEDELTSEP…NSQEDSSPKT (82 aa)). The segment covering 266–275 (SEPSKNGESN) has biased composition (polar residues). The span at 277-290 (NEEKEKDISTENHL) shows a compositional bias: basic and acidic residues. Residues 291 to 306 (ESTALNIQQQSDSTPT) are compositionally biased toward polar residues. A compositionally biased stretch (basic and acidic residues) spans 317 to 326 (VKTETSEDMK). The segment covering 328–339 (LSQNSQEDSSPK) has biased composition (polar residues).

The protein belongs to the class V-like SAM-binding methyltransferase superfamily. Histone-lysine methyltransferase family. SET2 subfamily.

It is found in the nucleus. Its subcellular location is the chromosome. The protein localises to the centromere. It catalyses the reaction L-lysyl(4)-[histone H3] + 3 S-adenosyl-L-methionine = N(6),N(6),N(6)-trimethyl-L-lysyl(4)-[histone H3] + 3 S-adenosyl-L-homocysteine + 3 H(+). Functionally, histone methyltransferase involved in regulation of flowering time. Required for the expression of the SOC1/AGL20 gene. Required for histone H3 trimethylation on 'Lys-4' (H3K4me3) at the SOC1 locus. Prevents trimethylation on 'Lys-27' (H3K27me3) at the same locus. The protein is Histone-lysine N-methyltransferase ASHH1 (ASHH1) of Arabidopsis thaliana (Mouse-ear cress).